A 360-amino-acid chain; its full sequence is Peptide chain release factor 1 (360 aa).

An N5-methylglutamine modification is found at glutamine 235. The span at 281–307 shows a compositional bias: basic and acidic residues; the sequence is ERQRADSERSADRRNQVGSGDRSERIR. Residues 281–310 form a disordered region; sequence ERQRADSERSADRRNQVGSGDRSERIRTYN.

Belongs to the prokaryotic/mitochondrial release factor family. Methylated by PrmC. Methylation increases the termination efficiency of RF1.

The protein localises to the cytoplasm. Functionally, peptide chain release factor 1 directs the termination of translation in response to the peptide chain termination codons UAG and UAA. The protein is Peptide chain release factor 1 of Sinorhizobium medicae (strain WSM419) (Ensifer medicae).